The sequence spans 171 residues: RxLR effector protein CRE7 (171 aa).

The signal sequence occupies residues 1–23 (MRAIAILLAVVATIFASLHGVSA). The short motif at 46 to 59 (RRLRQTGDASDEER) is the RxLR-dEER element.

Belongs to the RxLR effector family.

The protein resides in the secreted. The protein localises to the host cell. Effector that is involved in host plant infection. Contributes to virulence during the early infection stage, by inhibiting plant defense responses induced by both PAMP-triggered immunity (PTI) and effector-triggered immunity (ETI). The protein is RxLR effector protein CRE7 of Phytophthora infestans (strain T30-4) (Potato late blight agent).